Consider the following 297-residue polypeptide: Iron-sulfur cluster assembly SufBD family protein ycf24 (297 aa).

It belongs to the iron-sulfur cluster assembly SufBD family.

The protein resides in the plastid. Its subcellular location is the chloroplast. This is Iron-sulfur cluster assembly SufBD family protein ycf24 (ycf24) from Antithamnion sp. (Red alga).